A 404-amino-acid polypeptide reads, in one-letter code: MAKEKIVLAYSGGLDTSVAIQWLVESGYEVIACCLDVGEGKNLDFIKEKAITVGASESYTIDAKEEFAEDFALIALQAHAYYEGKYPLISALSRPLIAKKLVEVARQEGASAIAHGCTGKGNDQVRFEVAIHALAPDLKVVSPVRDWKWSREEEINYAKEHDIPVPIDLDNPFSIDQNLWGRSNECGVLENPWTTPPEAAYDLTVSLEDAPDTADIVEITFDAGIPISLNGENMSLANLILTLNEIAGKHGVGRIDHIENRLVGIKSREVYECPAAVTLITAHKELEDLTFVREVAHFKPIIEQKISETIYNGLWFSPLTEALVAFLKSTQKFVNGTIRVKLFKGHAIVEGRKSPNSLYDENLATYTSSDTFDQDAAVGFIKLWGLPTKVNAEVNSKVTITTEV.

9-17 (AYSGGLDTS) lines the ATP pocket. Tyr-86 contributes to the L-citrulline binding site. Residue Gly-116 coordinates ATP. 3 residues coordinate L-aspartate: Thr-118, Asn-122, and Asp-123. Asn-122 is a binding site for L-citrulline. Positions 126, 174, 183, 259, and 271 each coordinate L-citrulline.

It belongs to the argininosuccinate synthase family. Type 1 subfamily. As to quaternary structure, homotetramer.

The protein localises to the cytoplasm. It carries out the reaction L-citrulline + L-aspartate + ATP = 2-(N(omega)-L-arginino)succinate + AMP + diphosphate + H(+). Its pathway is amino-acid biosynthesis; L-arginine biosynthesis; L-arginine from L-ornithine and carbamoyl phosphate: step 2/3. The sequence is that of Argininosuccinate synthase from Listeria monocytogenes serovar 1/2a (strain ATCC BAA-679 / EGD-e).